The chain runs to 165 residues: Small ribosomal subunit protein eS10 (165 aa).

Tyr-12 is subject to Phosphotyrosine. Residues 92–165 (ATLRRSRPET…FGRGRGQPPQ (74 aa)) are disordered. Residues 97–128 (SRPETGRPRPKGLEGERPARLTRGEADRDTYR) are compositionally biased toward basic and acidic residues. Residues Lys-138 and Lys-139 each participate in a glycyl lysine isopeptide (Lys-Gly) (interchain with G-Cter in ubiquitin) cross-link. The residue at position 146 (Ser-146) is a Phosphoserine. Arg-153 carries the post-translational modification Omega-N-methylarginine. Gly residues predominate over residues 154–165 (GGFGRGRGQPPQ). Arg-158 and Arg-160 each carry symmetric dimethylarginine.

Belongs to the eukaryotic ribosomal protein eS10 family. As to quaternary structure, component of the small ribosomal subunit. The methylated form interacts with NPM1. Methylated by PRMT5. Methylation is necessary for its interaction with NPS1, its localization in the granular component (GC) region of the nucleolus, for the proper assembly of ribosomes, protein synthesis and optimal cell proliferation. Post-translationally, monoubiquitinated by ZNF598 when a ribosome has stalled during translation of poly(A) sequences, leading to preclude synthesis of a long poly-lysine tail and initiate the ribosome quality control (RQC) pathway to degrade the potentially detrimental aberrant nascent polypeptide. Deubiquitinated by OTUD3 and USP21, antagonizing ZNF598 activity. Deubiquitinated by OTUD1, antagonizing ZNF598 activity and stimulating formation of polysomes: deubiquitination by OTUD1 promotes stability and translation of a subset mRNAs with a high abundance of rare codons can limit the translation rate. Deubiquitinated by USP10.

The protein localises to the cytoplasm. Its subcellular location is the nucleus. The protein resides in the nucleolus. Functionally, component of the 40S ribosomal subunit. The ribosome is a large ribonucleoprotein complex responsible for the synthesis of proteins in the cell. In Oryctolagus cuniculus (Rabbit), this protein is Small ribosomal subunit protein eS10 (RPS10).